Consider the following 181-residue polypeptide: Oligoribonuclease (181 aa).

The region spanning 8 to 171 is the Exonuclease domain; sequence LIWLDLEMTG…DDIKDSIMEL (164 aa). Tyrosine 129 is an active-site residue.

Belongs to the oligoribonuclease family.

The protein localises to the cytoplasm. Its function is as follows. 3'-to-5' exoribonuclease specific for small oligoribonucleotides. This Pseudoalteromonas translucida (strain TAC 125) protein is Oligoribonuclease.